We begin with the raw amino-acid sequence, 616 residues long: Dihydroxy-acid dehydratase (616 aa).

Position 81 (Asp81) interacts with Mg(2+). Residue Cys122 participates in [2Fe-2S] cluster binding. Positions 123 and 124 each coordinate Mg(2+). The residue at position 124 (Lys124) is an N6-carboxylysine. Cys195 contributes to the [2Fe-2S] cluster binding site. Glu491 is a binding site for Mg(2+). Residue Ser517 is the Proton acceptor of the active site.

Belongs to the IlvD/Edd family. In terms of assembly, homodimer. [2Fe-2S] cluster is required as a cofactor. Requires Mg(2+) as cofactor.

It carries out the reaction (2R)-2,3-dihydroxy-3-methylbutanoate = 3-methyl-2-oxobutanoate + H2O. The catalysed reaction is (2R,3R)-2,3-dihydroxy-3-methylpentanoate = (S)-3-methyl-2-oxopentanoate + H2O. It functions in the pathway amino-acid biosynthesis; L-isoleucine biosynthesis; L-isoleucine from 2-oxobutanoate: step 3/4. Its pathway is amino-acid biosynthesis; L-valine biosynthesis; L-valine from pyruvate: step 3/4. In terms of biological role, functions in the biosynthesis of branched-chain amino acids. Catalyzes the dehydration of (2R,3R)-2,3-dihydroxy-3-methylpentanoate (2,3-dihydroxy-3-methylvalerate) into 2-oxo-3-methylpentanoate (2-oxo-3-methylvalerate) and of (2R)-2,3-dihydroxy-3-methylbutanoate (2,3-dihydroxyisovalerate) into 2-oxo-3-methylbutanoate (2-oxoisovalerate), the penultimate precursor to L-isoleucine and L-valine, respectively. The chain is Dihydroxy-acid dehydratase from Escherichia coli O17:K52:H18 (strain UMN026 / ExPEC).